The primary structure comprises 353 residues: Probable butyrate kinase (353 aa).

The protein belongs to the acetokinase family.

The protein localises to the cytoplasm. It carries out the reaction butanoate + ATP = butanoyl phosphate + ADP. This is Probable butyrate kinase from Bacteroides thetaiotaomicron (strain ATCC 29148 / DSM 2079 / JCM 5827 / CCUG 10774 / NCTC 10582 / VPI-5482 / E50).